We begin with the raw amino-acid sequence, 358 residues long: MSSVGDFEEIILHDLKPYYHVPGAIHSEGITFVKETGTLLWVDIFKGEVHKVEDIEQPESSHSFFSISRANYGKNASIEYPPNPDELKESVGCIFPILDGASQNEIKQVLFGSKFGIGKLDFSKSEWEYVILYSECPELSTDRAYKLRSNDGNVSPDGKYIYVGLMSDFPFDLEPIGCLLRVDLLAHKIELVWNCLLIPNAIHWDESDQKTMYVTDSLNFTIWKCPGGDLLKRDELIDVKNSNNQSFESPEPDGSAIWFSKDGKHSGFLFITVWSTSKVQMFDLTNGKLLKEFILPEQTPRVSCCCFVGKDLFVTTANAEINDAVRTNTDKNGGCIYKIPNVLDGNVPLESTKRQPLH.

This sequence belongs to the SMP-30/CGR1 family.

This is an uncharacterized protein from Saccharomyces cerevisiae (strain ATCC 204508 / S288c) (Baker's yeast).